A 58-amino-acid chain; its full sequence is Small ribosomal subunit protein bS21 (58 aa).

The tract at residues 37–58 (FYEKPSVKRKKKSEAARKRKKF) is disordered. A compositionally biased stretch (basic residues) spans 43-58 (VKRKKKSEAARKRKKF).

The protein belongs to the bacterial ribosomal protein bS21 family.

The chain is Small ribosomal subunit protein bS21 from Enterococcus faecalis (strain ATCC 700802 / V583).